The chain runs to 101 residues: Small ribosomal subunit protein uS14 (101 aa).

The protein belongs to the universal ribosomal protein uS14 family. Part of the 30S ribosomal subunit. Contacts proteins S3 and S10.

Its function is as follows. Binds 16S rRNA, required for the assembly of 30S particles and may also be responsible for determining the conformation of the 16S rRNA at the A site. The chain is Small ribosomal subunit protein uS14 from Synechococcus sp. (strain JA-2-3B'a(2-13)) (Cyanobacteria bacterium Yellowstone B-Prime).